Here is a 296-residue protein sequence, read N- to C-terminus: GTP cyclohydrolase FolE2 (296 aa).

Belongs to the GTP cyclohydrolase IV family.

It carries out the reaction GTP + H2O = 7,8-dihydroneopterin 3'-triphosphate + formate + H(+). The protein operates within cofactor biosynthesis; 7,8-dihydroneopterin triphosphate biosynthesis; 7,8-dihydroneopterin triphosphate from GTP: step 1/1. Functionally, converts GTP to 7,8-dihydroneopterin triphosphate. The sequence is that of GTP cyclohydrolase FolE2 from Delftia acidovorans (strain DSM 14801 / SPH-1).